A 367-amino-acid polypeptide reads, in one-letter code: 2-aminoethylphosphonate--pyruvate transaminase (367 aa).

Lys-193 is modified (N6-(pyridoxal phosphate)lysine).

It belongs to the class-V pyridoxal-phosphate-dependent aminotransferase family. PhnW subfamily. In terms of assembly, homodimer. Requires pyridoxal 5'-phosphate as cofactor.

The catalysed reaction is (2-aminoethyl)phosphonate + pyruvate = phosphonoacetaldehyde + L-alanine. In terms of biological role, involved in phosphonate degradation. This chain is 2-aminoethylphosphonate--pyruvate transaminase, found in Vibrio parahaemolyticus serotype O3:K6 (strain RIMD 2210633).